The sequence spans 306 residues: Protein SEC13 homolog (306 aa).

6 WD repeats span residues glutamine 11–proline 50, glycine 56–threonine 97, threonine 102–glutamine 143, cysteine 150–threonine 195, cysteine 202–tryptophan 245, and glutamine 252–lysine 291.

Belongs to the WD repeat SEC13 family. As to quaternary structure, probably part of the GATOR complex.

The protein resides in the cytoplasmic vesicle. It localises to the COPII-coated vesicle membrane. The protein localises to the endoplasmic reticulum membrane. Its subcellular location is the nucleus. It is found in the nuclear pore complex. The protein resides in the lysosome membrane. In terms of biological role, functions as a component of the nuclear pore complex (NPC) and the COPII coat. Functionally, as a component of the GATOR complex may function in the amino acid-sensing branch of the TORC1 signaling pathway. The polypeptide is Protein SEC13 homolog (Caenorhabditis briggsae).